A 399-amino-acid polypeptide reads, in one-letter code: Elongation factor Tu (399 aa).

In terms of domain architecture, tr-type G spans 10–204; sequence KPHVNIGTIG…AVDANIPEPE (195 aa). A G1 region spans residues 19 to 26; it reads GHVDHGKT. A GTP-binding site is contributed by 19-26; sequence GHVDHGKT. T26 serves as a coordination point for Mg(2+). The segment at 60-64 is G2; that stretch reads GITIN. The G3 stretch occupies residues 81-84; it reads DCPG. GTP is bound by residues 81 to 85 and 136 to 139; these read DCPGH and NKCD. Residues 136–139 form a G4 region; it reads NKCD. The segment at 174-176 is G5; that stretch reads SGL.

Belongs to the TRAFAC class translation factor GTPase superfamily. Classic translation factor GTPase family. EF-Tu/EF-1A subfamily. As to quaternary structure, monomer.

It is found in the cytoplasm. It catalyses the reaction GTP + H2O = GDP + phosphate + H(+). Its function is as follows. GTP hydrolase that promotes the GTP-dependent binding of aminoacyl-tRNA to the A-site of ribosomes during protein biosynthesis. This is Elongation factor Tu from Synechococcus sp. (strain WH7803).